The following is a 214-amino-acid chain: MASLFKKKTVDDIIREQNKELRGTQRAITRDRAALEKQEKQLEMEIKKMAKAGNKDACRVLAKQLVQLRKQKTRTYAVSSKVTSMSTQTKVMSSQMKMAGAMSTTAKTMQAVNKKMDPQKTLQTMQNFQKENMKMEMTEEMINDTLDDIFDASDDEEESQDIVNQVLDEIGIEISGKMAKAPSAAKGLPSTSASKSSGISDEEIERQLKALGVD.

Residues 16–55 (EQNKELRGTQRAITRDRAALEKQEKQLEMEIKKMAKAGNK) are a coiled coil. The interval 178–203 (MAKAPSAAKGLPSTSASKSSGISDEE) is disordered. Residues 189–199 (PSTSASKSSGI) show a composition bias toward polar residues. The short motif at 202 to 212 (EEIERQLKALG) is the MIT-interacting motif element.

Belongs to the SNF7 family. As to quaternary structure, probable core component of the endosomal sorting required for transport complex III (ESCRT-III). ESCRT-III components are thought to multimerize to form a flat lattice on the perimeter membrane of the endosome.

Its subcellular location is the cytoplasm. The protein localises to the cytosol. It is found in the late endosome membrane. In terms of biological role, probable core component of the endosomal sorting required for transport complex III (ESCRT-III) which is involved in multivesicular bodies (MVBs) formation and sorting of endosomal cargo proteins into MVBs. MVBs contain intraluminal vesicles (ILVs) that are generated by invagination and scission from the limiting membrane of the endosome and mostly are delivered to lysosomes enabling degradation of membrane proteins, such as stimulated growth factor receptors, lysosomal enzymes and lipids. The sequence is that of Charged multivesicular body protein 2b (chmp2b) from Xenopus tropicalis (Western clawed frog).